Consider the following 191-residue polypeptide: Cell division protein SepF (191 aa).

Polar residues predominate over residues 156–167 (EEASPSNMSNKG). Residues 156–191 (EEASPSNMSNKGNDLISKETSPAPEPAWGETVATAL) form a disordered region.

Belongs to the SepF family. In terms of assembly, homodimer. Interacts with FtsZ.

The protein resides in the cytoplasm. In terms of biological role, cell division protein that is part of the divisome complex and is recruited early to the Z-ring. Probably stimulates Z-ring formation, perhaps through the cross-linking of FtsZ protofilaments. Its function overlaps with FtsA. This Prochlorococcus marinus (strain NATL2A) protein is Cell division protein SepF.